The primary structure comprises 81 residues: Translational regulator CsrA (81 aa).

This sequence belongs to the CsrA/RsmA family. Homodimer; the beta-strands of each monomer intercalate to form a hydrophobic core, while the alpha-helices form wings that extend away from the core.

Its subcellular location is the cytoplasm. Its function is as follows. A translational regulator that binds mRNA to regulate translation initiation and/or mRNA stability. Usually binds in the 5'-UTR at or near the Shine-Dalgarno sequence preventing ribosome-binding, thus repressing translation. Its main target seems to be the major flagellin gene, while its function is anatagonized by FliW. This chain is Translational regulator CsrA, found in Borreliella burgdorferi (strain ATCC 35210 / DSM 4680 / CIP 102532 / B31) (Borrelia burgdorferi).